The chain runs to 1373 residues: MVSLRDNIEAQPLSHNRRIRKNFGHINLVADIPNLIEIQKNSYEKNFLQLNIKDSERKNKGLQSILNSIFPISDSSNIANLEFVKYEFDTPKYDVEECSQRSLSYAAPLKVTLRLSIWDIDEDTGTREIKGIKEQEVYMGDIPLMTKNGTFIINGTERVVVSQMHRSPGVFFYHDEGKVHSSGKLLYSARVIPYRGSWLDLEFDAKDVLYFRIDRKRKLYATTLLRAIGMSTEEIIKFYYNSVTYKLVKKKGWAVKFIPKHITAHRLTSDLVDADTGNVLLKAGQKITPRLAQKYCAEGINNILVAHETLIGKYLSEDLRDPASDEVLAKIGEIITSDMLNVINDLKIKNVNVLVINPQSGPYIRNTLFADKNQDREAALCDIFRVLRPGEPTNIEAAESLFYNLFFDSERYDLSEVGRIKMNSRLGLSISEEVTVLTIDDIKNIVRVLVELKDGKGIIDDIDHLGNRRVRSVGELIENQFRIGLVRMEKSVIERMSAGDVDTVMPHDLVNSKILVSVVKEFFSTSQLSQFMDQTNPLSEITHKRRLSALGPGGLSRDRAGFEVRDVHPTHYGRICPIETPEGQNIGLINSMATYARINKHGFIESPYRKVKDGRVIDEVIYLSAIEEGKYKIGQANSKVDRDGKLQGEFINCRVEGGNFVMVEPHEVDFIDVTPMQVVSVAASLIPFLENDDANRALMGSNMQRQAVPLIKTDAPFVGTGVEGVVAKDSGASVLALHDGIVEQVDSNRIVIRTLEQKIDGSPSVYIYNLLKFQKSNHNTCINQKPLVQVGHYVKKNDIIADGPSTDNGEIALGRNVLVAFLPWNGYNFEDSILISERIVKEDIFTSIHIEEFEVIARDTRLGPEEITRDIPNVSEEALRHLDEVGIIYVGAEVKAGDILVGKVTPKSESPITPEEKLLRAIFGEKAFDVKDSSLHVPSGVSGTVVEVRVFSRRGVEKDQRAIAIEKQQIEKLAKDRDDELEIIEHFVFSLLEKLLVGQVIINGLKQVKAGQTITTEMLKGLSKGQFWQLTVEDANVMNEIEQIKIHYDEKKDALNKRFATKVEKLQSGDDLPQGALKVVKVFIATKHKLQPGDKMAGRHGNKGVVSRIVPEEDMPFLEDGTVVDIVLNPLGLPSRMNIGQILETHLGWASINLAQKISTLVKEYKNKNIGIEKIKKFLLELYGENINYILERSEEEIISFCNKVGKGVYFATPVFDGAKVQDVKDMLKLAGQDPSGQVKLIDGRTGEYFDRLVTVGQKYLLKLHHLVDNKIHSRSIGPYSLVTQQPLGGKSHFGGQRFGEMECWALQAYGAAYTLQEMLTVKSDDVNGRIKTYDSIVRGENNFESGIPESFNVMIKEFRSLCLNVKLEVTSS.

It belongs to the RNA polymerase beta chain family. As to quaternary structure, the RNAP catalytic core consists of 2 alpha, 1 beta, 1 beta' and 1 omega subunit. When a sigma factor is associated with the core the holoenzyme is formed, which can initiate transcription.

The enzyme catalyses RNA(n) + a ribonucleoside 5'-triphosphate = RNA(n+1) + diphosphate. Its function is as follows. DNA-dependent RNA polymerase catalyzes the transcription of DNA into RNA using the four ribonucleoside triphosphates as substrates. This is DNA-directed RNA polymerase subunit beta from Rickettsia akari (strain Hartford).